Here is a 364-residue protein sequence, read N- to C-terminus: Heavy metal-associated isoprenylated plant protein 35 (364 aa).

The span at 1-12 shows a compositional bias: basic and acidic residues; the sequence is MATDEMKSETKK. The interval 1–33 is disordered; the sequence is MATDEMKSETKKTEHKQKQSTQIKQDLPPPTIP. Residues 39-102 form the HMA domain; it reads YKSCTLKVSI…KLNKAGKNAE (64 aa). Residues Cys50 and Cys53 each coordinate a metal cation. Residues 101–265 form a disordered region; it reads AEQLPEIPDP…PPTATDYDRP (165 aa). The segment covering 111–122 has biased composition (basic and acidic residues); it reads VDNKPKPVDPKE. Residues 134–144 are compositionally biased toward polar residues; that stretch reads QITNEATSSGI. 2 stretches are compositionally biased toward basic and acidic residues: residues 154 to 169 and 180 to 198; these read ECDKPESEKPVDEKCL and VKEEKKDVLKEKDSGKEES. A compositionally biased stretch (polar residues) spans 237–253; it reads SLATTNNPTDGPARTQS. The residue at position 361 (Cys361) is a Cysteine methyl ester. Cys361 is lipidated: S-farnesyl cysteine. Positions 362 to 364 are cleaved as a propeptide — removed in mature form; that stretch reads AIM.

It belongs to the HIPP family.

Heavy-metal-binding protein. In Arabidopsis thaliana (Mouse-ear cress), this protein is Heavy metal-associated isoprenylated plant protein 35.